The chain runs to 498 residues: MAEEQQAHLEDLNDQMLVRREKMEALREEGIDPFGKRFDRTHNSAELHEQYDNHTKEELSEMNTEVSVAGRMMTKRGKGKAGFAHLQDREGQIQIYVRKDQVGDEAYELFKHADLGDFFGVTGQVMKTNTGEVTVKAQTITLLTKALRPLPDKYHGLTNVEQRYRQRYLDLISNKESFDRFMKRSQIISEIRRYLDGNGYVEVETPVLHNEAGGAAARPFITHHNALDMDLYLRIALELHLKRLIVGGMEKVYEIGRVFRNEGIDTTHNPEFTMLEAYTAYTDYQDVMDLTEGIIRNAAEKVLGTTDITYDGQAVDLGSPFKRLHMVDAVKEQTGVDFWQEMTIEEARALAKEHNVEITDAMTVGHIINEFFETFVEDTLQQPTFIYGHPVAVSPLAKKNPEDGRFTDRFELFIIGKEFANAFTELNDPIDQRERFEEQEKEREQGNDEAHGVDEDFIEALEYGLPPTGGLGIGIDRLVMLLTDAQSIRDVLLFPTMR.

Mg(2+) contacts are provided by Glu411 and Glu418.

This sequence belongs to the class-II aminoacyl-tRNA synthetase family. As to quaternary structure, homodimer. Mg(2+) is required as a cofactor.

It localises to the cytoplasm. It carries out the reaction tRNA(Lys) + L-lysine + ATP = L-lysyl-tRNA(Lys) + AMP + diphosphate. The polypeptide is Lysine--tRNA ligase (Enterococcus faecalis (strain ATCC 700802 / V583)).